The chain runs to 283 residues: Thymidylate synthase (283 aa).

Position 22 (arginine 22) interacts with dUMP. The Nucleophile role is filled by cysteine 160. Residues 180-183, asparagine 191, and 221-223 contribute to the dUMP site; these read RSCD and HIY. Aspartate 183 provides a ligand contact to (6R)-5,10-methylene-5,6,7,8-tetrahydrofolate. Serine 282 is a binding site for (6R)-5,10-methylene-5,6,7,8-tetrahydrofolate.

This sequence belongs to the thymidylate synthase family. Bacterial-type ThyA subfamily. In terms of assembly, homodimer.

The protein localises to the cytoplasm. It catalyses the reaction dUMP + (6R)-5,10-methylene-5,6,7,8-tetrahydrofolate = 7,8-dihydrofolate + dTMP. It functions in the pathway pyrimidine metabolism; dTTP biosynthesis. In terms of biological role, catalyzes the reductive methylation of 2'-deoxyuridine-5'-monophosphate (dUMP) to 2'-deoxythymidine-5'-monophosphate (dTMP) while utilizing 5,10-methylenetetrahydrofolate (mTHF) as the methyl donor and reductant in the reaction, yielding dihydrofolate (DHF) as a by-product. This enzymatic reaction provides an intracellular de novo source of dTMP, an essential precursor for DNA biosynthesis. The protein is Thymidylate synthase of Pseudoalteromonas translucida (strain TAC 125).